Reading from the N-terminus, the 132-residue chain is Small ribosomal subunit protein uS11 (132 aa).

It belongs to the universal ribosomal protein uS11 family. In terms of assembly, part of the 30S ribosomal subunit.

In terms of biological role, located on the platform of the 30S subunit. This Sulfolobus acidocaldarius (strain ATCC 33909 / DSM 639 / JCM 8929 / NBRC 15157 / NCIMB 11770) protein is Small ribosomal subunit protein uS11.